We begin with the raw amino-acid sequence, 566 residues long: Insulinoma-associated protein 2 (566 aa).

Residues 1–20 (MPRGFLVKRTKRTGGLYRVR) form an SNAG domain region. Residues 32–117 (QGAPPFLEEA…PSPSPAKPAG (86 aa)) are disordered. Positions 103–113 (GPSPSPSPSPA) are enriched in pro residues. Residues 263–283 (FICQLCKEQYADPFALAQHRC) form a C2H2-type 1; atypical zinc finger. The C2H2-type 2 zinc-finger motif lies at 291-313 (YRCPECDKVFSCPANLASHRRWH). Residues 310-418 (RRWHKPRPAA…RRVPVPGSTS (109 aa)) form a disordered region. A compositionally biased stretch (low complexity) spans 318–348 (AAANAATVSSADGKPPSSSSSSSRDSGAIAS). The span at 352–369 (EGKENSRIERTADQHPQA) shows a compositional bias: basic and acidic residues. 3 C2H2-type zinc fingers span residues 426 to 448 (FVCPYCHKKFRRQAYLRKHLSTH), 470 to 492 (FACPLCGAHFPTADIREKHRLWH), and 525 to 548 (FSCKHCPSTFFSSPGLTRHINKCH).

As to expression, expressed in heart, liver, skeletal muscle, kidney and pancreas, and, to a lesser extent, in brain, lung and spleen. In the pancreas, expressed in islet cells, including insulin- and glucagon-producing alpha- and beta-cells, but not in acinar cells (at protein level). Detected in adrenal glands, particularly in the deeper layer of the cortex (at protein level).

It is found in the cytoplasm. Its subcellular location is the nucleus. May function as a growth suppressor or tumor suppressor in liver cells and in certain neurons. This Homo sapiens (Human) protein is Insulinoma-associated protein 2 (INSM2).